A 972-amino-acid chain; its full sequence is RNA polymerase-associated protein RapA (972 aa).

A Helicase ATP-binding domain is found at 164–334 (EVGRRYAPRV…FARLRLLDPD (171 aa)). 177-184 (DEVGLGKT) is a binding site for ATP. A DEAH box motif is present at residues 280–283 (DEAH). The Helicase C-terminal domain maps to 493-671 (RVNWLLEMLK…HEPEALENLI (179 aa)).

It belongs to the SNF2/RAD54 helicase family. RapA subfamily. Interacts with the RNAP. Has a higher affinity for the core RNAP than for the holoenzyme. Its ATPase activity is stimulated by binding to RNAP.

In terms of biological role, transcription regulator that activates transcription by stimulating RNA polymerase (RNAP) recycling in case of stress conditions such as supercoiled DNA or high salt concentrations. Probably acts by releasing the RNAP, when it is trapped or immobilized on tightly supercoiled DNA. Does not activate transcription on linear DNA. Probably not involved in DNA repair. In Photobacterium profundum (strain SS9), this protein is RNA polymerase-associated protein RapA.